A 437-amino-acid polypeptide reads, in one-letter code: UDP-glucose 6-dehydrogenase (437 aa).

NAD(+)-binding residues include Val11, Asp30, Lys35, Thr86, Thr122, and Glu155. Residues 151 to 155, Lys209, Asn213, 254 to 258, and Gly262 contribute to the substrate site; these read EFLRE and FLHAG. Catalysis depends on Cys265, which acts as the Nucleophile. NAD(+) is bound at residue Lys268. Lys326 serves as a coordination point for substrate. Arg333 serves as a coordination point for NAD(+).

It belongs to the UDP-glucose/GDP-mannose dehydrogenase family.

The catalysed reaction is UDP-alpha-D-glucose + 2 NAD(+) + H2O = UDP-alpha-D-glucuronate + 2 NADH + 3 H(+). It participates in nucleotide-sugar biosynthesis; UDP-alpha-D-glucuronate biosynthesis; UDP-alpha-D-glucuronate from UDP-alpha-D-glucose: step 1/1. Its pathway is capsule biogenesis; capsule polysaccharide biosynthesis. In Rhizobium meliloti (strain 1021) (Ensifer meliloti), this protein is UDP-glucose 6-dehydrogenase.